Consider the following 425-residue polypeptide: Serine--tRNA ligase (425 aa).

L-serine is bound at residue 228-230; that stretch reads TAE. Position 259–261 (259–261) interacts with ATP; the sequence is RSE. Glu282 contributes to the L-serine binding site. Residue 346-349 coordinates ATP; it reads EIAS. Residue Ser382 coordinates L-serine.

Belongs to the class-II aminoacyl-tRNA synthetase family. Type-1 seryl-tRNA synthetase subfamily. As to quaternary structure, homodimer. The tRNA molecule binds across the dimer.

It is found in the cytoplasm. The catalysed reaction is tRNA(Ser) + L-serine + ATP = L-seryl-tRNA(Ser) + AMP + diphosphate + H(+). It carries out the reaction tRNA(Sec) + L-serine + ATP = L-seryl-tRNA(Sec) + AMP + diphosphate + H(+). Its pathway is aminoacyl-tRNA biosynthesis; selenocysteinyl-tRNA(Sec) biosynthesis; L-seryl-tRNA(Sec) from L-serine and tRNA(Sec): step 1/1. Catalyzes the attachment of serine to tRNA(Ser). Is also able to aminoacylate tRNA(Sec) with serine, to form the misacylated tRNA L-seryl-tRNA(Sec), which will be further converted into selenocysteinyl-tRNA(Sec). This Rickettsia peacockii (strain Rustic) protein is Serine--tRNA ligase.